Reading from the N-terminus, the 362-residue chain is MASKTRRGSSLAKKEKEIKKEIEEDKEVAPIQEEDDDGPPPILEREASCGENDDTDGDGKEEDAQKEDDIDGSKTKNESILEALSQFFTADDATVKNRRNSPPSESSSTRNTLGLNRGGAIPKALLLNKNLRPVPSKTPPIATTRFASLRHLSSAPGTSASTSGSPSVGIRKYGVPPPMPRSLRNIAGSINVVGSNSSLGPARLLESRKRHFDKDKDGKNPKRSSLVAYNGGRAGENFRKVPPSAVSPAPGSGSSASSGTSTSSSNGIIDVQSMLRDQSPVRMQVMVGGDHETNGDSIQEAMELANAQKESIGNIARASSHHNMLLGSMIINGLNTLQSRDKDEYTNFSSDLFSLITRYNIN.

Disordered stretches follow at residues 1–117 (MASK…GLNR), 153–172 (SSAP…GIRK), and 210–266 (RHFD…SSSN). Over residues 12 to 23 (AKKEKEIKKEIE) the composition is skewed to basic and acidic residues. Residues 51–70 (ENDDTDGDGKEEDAQKEDDI) show a composition bias toward acidic residues. Low complexity-rich tracts occupy residues 100-112 (NSPP…TRNT), 153-167 (SSAP…GSPS), and 241-265 (VPPS…TSSS).

This is an uncharacterized protein from Caenorhabditis elegans.